Consider the following 629-residue polypeptide: tRNA uridine 5-carboxymethylaminomethyl modification enzyme MnmG (629 aa).

FAD contacts are provided by residues 13–18 (GGGHAG), Val125, and Ser180. 273–287 (GPRYCPSIEDKVMRF) is an NAD(+) binding site. An FAD-binding site is contributed by Gln370.

The protein belongs to the MnmG family. In terms of assembly, homodimer. Heterotetramer of two MnmE and two MnmG subunits. Requires FAD as cofactor.

The protein localises to the cytoplasm. Functionally, NAD-binding protein involved in the addition of a carboxymethylaminomethyl (cmnm) group at the wobble position (U34) of certain tRNAs, forming tRNA-cmnm(5)s(2)U34. The protein is tRNA uridine 5-carboxymethylaminomethyl modification enzyme MnmG of Photobacterium profundum (strain SS9).